We begin with the raw amino-acid sequence, 362 residues long: tRNA N6-adenosine threonylcarbamoyltransferase (362 aa).

The Fe cation site is built by H116 and H120. Substrate contacts are provided by residues 138-142, D171, G184, and N284; that span reads LVSGG. D312 contributes to the Fe cation binding site.

Belongs to the KAE1 / TsaD family. Fe(2+) is required as a cofactor.

The protein localises to the cytoplasm. It catalyses the reaction L-threonylcarbamoyladenylate + adenosine(37) in tRNA = N(6)-L-threonylcarbamoyladenosine(37) in tRNA + AMP + H(+). Its function is as follows. Required for the formation of a threonylcarbamoyl group on adenosine at position 37 (t(6)A37) in tRNAs that read codons beginning with adenine. Is involved in the transfer of the threonylcarbamoyl moiety of threonylcarbamoyl-AMP (TC-AMP) to the N6 group of A37, together with TsaE and TsaB. TsaD likely plays a direct catalytic role in this reaction. This is tRNA N6-adenosine threonylcarbamoyltransferase from Chelativorans sp. (strain BNC1).